The chain runs to 435 residues: Glutamine synthetase (435 aa).

Residues 12 to 94 (KSIKYFMISY…VAADCVMDDR (83 aa)) enclose the GS beta-grasp domain. The 336-residue stretch at 100–435 (PRVVLKRLVA…QWERDSTLDI (336 aa)) folds into the GS catalytic domain. Residues E123, E125, E180, and E187 each coordinate Mg(2+). G232 is a binding site for L-glutamate. Residue H236 participates in Mg(2+) binding. S240 provides a ligand contact to ATP. L-glutamate-binding residues include R291 and R315. ATP contacts are provided by R315 and R320. E328 lines the Mg(2+) pocket. Residue R330 coordinates L-glutamate.

It belongs to the glutamine synthetase family. As to quaternary structure, homooctamer. Mg(2+) is required as a cofactor.

The catalysed reaction is L-glutamate + NH4(+) + ATP = L-glutamine + ADP + phosphate + H(+). Catalyzes the ATP-dependent biosynthesis of glutamine from glutamate and ammonia. This is Glutamine synthetase from Rhizobium leguminosarum bv. phaseoli.